The chain runs to 338 residues: Acyl-CoA-binding domain-containing protein 1 (338 aa).

The helical; Signal-anchor transmembrane segment at 11 to 31 threads the bilayer; that stretch reads IIFGLIFAYLLAKLISILLAF. N-linked (GlcNAc...) asparagine glycans are attached at residues Asn35 and Asn41. The disordered stretch occupies residues 69–89; that stretch reads AEQGSLRGDEDESDDDDWEGV. The segment covering 77–89 has biased composition (acidic residues); it reads DEDESDDDDWEGV. Positions 94 to 184 constitute an ACB domain; sequence LDEAFSAATA…VTQLYPAWVE (91 aa). Residues 126–130, Lys152, and Tyr171 each bind an acyl-CoA; that span reads YGLYK. The N-linked (GlcNAc...) asparagine glycan is linked to Asn191. 4 ANK repeats span residues 217-246, 250-279, 283-312, and 316-338; these read LKIDAIHAFAREGEVENLLKCIENGIPVNA, EGRTPLHWAIDRGHLNVAEALVDKNADVNA, EGQTSLHYAVVCEREALAEFLVKQKADTTI, and DGNSPLDLCESEWSWMREKKDSN.

The protein belongs to the ACBP family. Interacts with RAP2-12. Binds to SMO1-1 and SMO1-2. Post-translationally, glycosylated. In seeds, localized in the outer integument. In terms of tissue distribution, expressed at low levels in roots, stems, leaves, flowers, and siliques, especially within seeds.

It localises to the cell membrane. The protein resides in the secreted. It is found in the cell wall. The protein localises to the endoplasmic reticulum membrane. Its function is as follows. Binds medium- and long-chain acyl-CoA esters with very high affinity. Can interact in vitro with arachidonyl-CoA, barely with oleoyl-CoA, but not with palmitoyl-CoA. Confers tolerance and binds to lead ions Pb(2+), probably by promoting lead translocation from roots to shoots. May function as an intracellular carrier of acyl-CoA esters. Modulates negatively sterol synthesis during embryogenesis and gametophytes development via interactions with SMO1-1 and SMO1-2; sterols serve as lipid modulators for gene expression of homeodomain-leucine zipper IV transcription factors. The chain is Acyl-CoA-binding domain-containing protein 1 from Arabidopsis thaliana (Mouse-ear cress).